A 383-amino-acid polypeptide reads, in one-letter code: Putative protein FAM157A (383 aa).

Disordered regions lie at residues 1–21 (MGPL…PLPK) and 177–254 (ATAR…PLGR).

This sequence belongs to the FAM157 family.

The protein is Putative protein FAM157A (FAM157A) of Homo sapiens (Human).